The sequence spans 212 residues: Adenylate kinase (212 aa).

10–15 (GAGKGT) is a binding site for ATP. The segment at 30–59 (STGDMFRAAMANQTEMGVLAKSYIDKGELV) is NMP. Residues threonine 31, arginine 36, 57–59 (ELV), 86–89 (GYPR), and glutamine 93 contribute to the AMP site. The LID stretch occupies residues 127-159 (GRIIHRVTGETFHKVFNPPVDYKEEDYYQREDD). ATP is bound by residues arginine 128 and 137–138 (TF). The AMP site is built by arginine 156 and arginine 167. Position 195 (glutamine 195) interacts with ATP.

It belongs to the adenylate kinase family. Monomer.

It localises to the cytoplasm. The catalysed reaction is AMP + ATP = 2 ADP. Its pathway is purine metabolism; AMP biosynthesis via salvage pathway; AMP from ADP: step 1/1. Functionally, catalyzes the reversible transfer of the terminal phosphate group between ATP and AMP. Plays an important role in cellular energy homeostasis and in adenine nucleotide metabolism. The sequence is that of Adenylate kinase from Streptococcus pneumoniae (strain JJA).